A 221-amino-acid polypeptide reads, in one-letter code: uncharacterized protein (221 aa).

The signal sequence occupies residues 1-18 (MKRFLLLIILFGISFSFV).

This is an uncharacterized protein from Aquifex aeolicus (strain VF5).